We begin with the raw amino-acid sequence, 542 residues long: Coiled-coil domain-containing protein 60 (542 aa).

Positions 70–97 form a coiled coil; the sequence is TMLQEETAFKKHQQHLKKLQEEELNKFQ. Disordered regions lie at residues 228–284 and 334–358; these read ATRK…EEEV and QTTH…TQKK. Composition is skewed to low complexity over residues 245–261 and 342–351; these read SGGS…NPSS and RSSTTSGESH.

This Rattus norvegicus (Rat) protein is Coiled-coil domain-containing protein 60 (Ccdc60).